Here is a 165-residue protein sequence, read N- to C-terminus: Phosphopantetheine adenylyltransferase (165 aa).

Serine 10 lines the substrate pocket. ATP-binding positions include 10-11 and histidine 18; that span reads SF. Residues lysine 42, threonine 79, and arginine 93 each contribute to the substrate site. ATP-binding positions include 94-96, glutamate 104, and 129-135; these read GLR and VRPITAT.

Belongs to the bacterial CoaD family. Homohexamer. The cofactor is Mg(2+).

Its subcellular location is the cytoplasm. The catalysed reaction is (R)-4'-phosphopantetheine + ATP + H(+) = 3'-dephospho-CoA + diphosphate. The protein operates within cofactor biosynthesis; coenzyme A biosynthesis; CoA from (R)-pantothenate: step 4/5. Its function is as follows. Reversibly transfers an adenylyl group from ATP to 4'-phosphopantetheine, yielding dephospho-CoA (dPCoA) and pyrophosphate. The sequence is that of Phosphopantetheine adenylyltransferase from Nitrobacter winogradskyi (strain ATCC 25391 / DSM 10237 / CIP 104748 / NCIMB 11846 / Nb-255).